The sequence spans 99 residues: Large ribosomal subunit protein uL23 (99 aa).

This sequence belongs to the universal ribosomal protein uL23 family. Part of the 50S ribosomal subunit. Contacts protein L29, and trigger factor when it is bound to the ribosome.

Functionally, one of the early assembly proteins it binds 23S rRNA. One of the proteins that surrounds the polypeptide exit tunnel on the outside of the ribosome. Forms the main docking site for trigger factor binding to the ribosome. The chain is Large ribosomal subunit protein uL23 from Clavibacter michiganensis subsp. michiganensis (strain NCPPB 382).